The following is a 764-amino-acid chain: Semaphorin-3D (764 aa).

Residues 1-41 (MKTAGEPDRRRQRRQVRTGRFSCAWWSTSVMLFFSLPEGNC) form the signal peptide. The region spanning 48–535 (RVKLGYKDLI…GSDGLVQVSL (488 aa)) is the Sema domain. A disulfide bond links C121 and C132. A glycan (N-linked (GlcNAc...) asparagine) is linked at N143. 3 cysteine pairs are disulfide-bonded: C150–C159, C290–C402, and C314–C362. N-linked (GlcNAc...) asparagine glycosylation occurs at N490. A disulfide bridge connects residues C538 and C556. A glycan (N-linked (GlcNAc...) asparagine) is linked at N610. The 80-residue stretch at 661 to 740 (GDAGSYFCTS…EYCETMWHRE (80 aa)) folds into the Ig-like C2-type domain. C668 and C733 are disulfide-bonded. Residues 743 to 764 (QKQKGKWKHVQELRKSRNRRHH) form a disordered region.

This sequence belongs to the semaphorin family.

It is found in the secreted. Its function is as follows. May play a role in the guidance of several axon pathways. The sequence is that of Semaphorin-3D (sema3d) from Danio rerio (Zebrafish).